Reading from the N-terminus, the 368-residue chain is Phospho-N-acetylmuramoyl-pentapeptide-transferase (368 aa).

Transmembrane regions (helical) follow at residues 32-52, 79-99, 102-122, 142-160, 176-196, 207-227, 244-264, 271-291, 296-316, and 345-365; these read TGGAVVTGALFVFLFGPWIID, TPTMGGLMILSGLVVSTVLWA, LNPYVWIVLAVTLGFGLIGFY, LLLELLIALAACYALTRLG, VALDLGWFFLGFGAFIIVGAG, GLAIVPVMIAAASFAMIAYLA, AGELAVLCGAVLGAGLGFLWF, IFMGDTGSLALGGMLGSIAVA, IVLAVIGGLFVLEAVSVIVQV, and QIVIRFWIISVMLALAGLSTL.

It belongs to the glycosyltransferase 4 family. MraY subfamily. It depends on Mg(2+) as a cofactor.

The protein localises to the cell inner membrane. It catalyses the reaction UDP-N-acetyl-alpha-D-muramoyl-L-alanyl-gamma-D-glutamyl-meso-2,6-diaminopimeloyl-D-alanyl-D-alanine + di-trans,octa-cis-undecaprenyl phosphate = di-trans,octa-cis-undecaprenyl diphospho-N-acetyl-alpha-D-muramoyl-L-alanyl-D-glutamyl-meso-2,6-diaminopimeloyl-D-alanyl-D-alanine + UMP. Its pathway is cell wall biogenesis; peptidoglycan biosynthesis. Catalyzes the initial step of the lipid cycle reactions in the biosynthesis of the cell wall peptidoglycan: transfers peptidoglycan precursor phospho-MurNAc-pentapeptide from UDP-MurNAc-pentapeptide onto the lipid carrier undecaprenyl phosphate, yielding undecaprenyl-pyrophosphoryl-MurNAc-pentapeptide, known as lipid I. This is Phospho-N-acetylmuramoyl-pentapeptide-transferase from Nitrobacter winogradskyi (strain ATCC 25391 / DSM 10237 / CIP 104748 / NCIMB 11846 / Nb-255).